A 280-amino-acid chain; its full sequence is Eukaryotic translation initiation factor 3 subunit F-1 (280 aa).

The MPN domain occupies 8–138 (VRVHPVVLFQ…LRAYVCIQLG (131 aa)).

It belongs to the eIF-3 subunit F family. As to quaternary structure, component of the eukaryotic translation initiation factor 3 (eIF-3) complex. The eIF-3 complex interacts with pix.

It is found in the cytoplasm. Functionally, component of the eukaryotic translation initiation factor 3 (eIF-3) complex, which is involved in protein synthesis of a specialized repertoire of mRNAs and, together with other initiation factors, stimulates binding of mRNA and methionyl-tRNAi to the 40S ribosome. The eIF-3 complex specifically targets and initiates translation of a subset of mRNAs involved in cell proliferation. In Drosophila yakuba (Fruit fly), this protein is Eukaryotic translation initiation factor 3 subunit F-1.